The following is a 617-amino-acid chain: Probable Xaa-Pro aminopeptidase P (617 aa).

Mn(2+) is bound by residues Asp-414, Asp-425, Glu-523, and Glu-537.

Belongs to the peptidase M24B family. Requires Mn(2+) as cofactor.

The enzyme catalyses Release of any N-terminal amino acid, including proline, that is linked to proline, even from a dipeptide or tripeptide.. Functionally, catalyzes the removal of a penultimate prolyl residue from the N-termini of peptides. This chain is Probable Xaa-Pro aminopeptidase P (AMPP), found in Blastomyces gilchristii (strain SLH14081) (Blastomyces dermatitidis).